A 209-amino-acid polypeptide reads, in one-letter code: Imidazoleglycerol-phosphate dehydratase (209 aa).

Belongs to the imidazoleglycerol-phosphate dehydratase family.

The protein resides in the cytoplasm. The enzyme catalyses D-erythro-1-(imidazol-4-yl)glycerol 3-phosphate = 3-(imidazol-4-yl)-2-oxopropyl phosphate + H2O. The protein operates within amino-acid biosynthesis; L-histidine biosynthesis; L-histidine from 5-phospho-alpha-D-ribose 1-diphosphate: step 6/9. This chain is Imidazoleglycerol-phosphate dehydratase, found in Nostoc sp. (strain PCC 7120 / SAG 25.82 / UTEX 2576).